Reading from the N-terminus, the 407-residue chain is MKRAFIMVLDSFGIGATEDADRFGDVGSDTLGHIAEACAKGEADNGRKGPLNLPNLTRLGLVKAHEGSTGKIAAGMDGNADVIGAYAWAHELSSGKDTPSGHWEIAGVPVLFDWGYFSDHENSFPQELLDKLVKRANLPGYLGNCHSSGTVILDQLGEEHMKTGKPIFYTSADSVFQIACHEETFGLDKLYELCEIAREELTEGGYNIGRVIARPFIGDKAGNFQRTGNRHDLAVEPPAPTVLQKLVDEKQGHVVSVGKIADIYANCGITKKVKATGLDALFDATIKEMKDAGDKTIVFTNFVDFDSSWGHRRDIAGYASGLELFDRRLPELMALVGEDDILILTADHGCDPSWTGTDHTREHIPVLIYGPKVKPGSLGHRETFADIGQTLASYFGTSPMDYGKNML.

Residues Asp-10, Asp-306, His-311, Asp-347, His-348, and His-359 each coordinate Mn(2+).

It belongs to the phosphopentomutase family. Mn(2+) serves as cofactor.

It is found in the cytoplasm. It catalyses the reaction 2-deoxy-alpha-D-ribose 1-phosphate = 2-deoxy-D-ribose 5-phosphate. The enzyme catalyses alpha-D-ribose 1-phosphate = D-ribose 5-phosphate. Its pathway is carbohydrate degradation; 2-deoxy-D-ribose 1-phosphate degradation; D-glyceraldehyde 3-phosphate and acetaldehyde from 2-deoxy-alpha-D-ribose 1-phosphate: step 1/2. Its function is as follows. Isomerase that catalyzes the conversion of deoxy-ribose 1-phosphate (dRib-1-P) and ribose 1-phosphate (Rib-1-P) to deoxy-ribose 5-phosphate (dRib-5-P) and ribose 5-phosphate (Rib-5-P), respectively. This is Phosphopentomutase from Salmonella arizonae (strain ATCC BAA-731 / CDC346-86 / RSK2980).